Reading from the N-terminus, the 134-residue chain is Small ribosomal subunit protein uS12 (134 aa).

Asp-89 is subject to 3-methylthioaspartic acid. The segment at Lys-109–Lys-134 is disordered. The span at Asn-111 to Lys-123 shows a compositional bias: basic residues. Over residues Ala-124–Lys-134 the composition is skewed to low complexity.

Belongs to the universal ribosomal protein uS12 family. As to quaternary structure, part of the 30S ribosomal subunit. Contacts proteins S8 and S17. May interact with IF1 in the 30S initiation complex.

Functionally, with S4 and S5 plays an important role in translational accuracy. Its function is as follows. Interacts with and stabilizes bases of the 16S rRNA that are involved in tRNA selection in the A site and with the mRNA backbone. Located at the interface of the 30S and 50S subunits, it traverses the body of the 30S subunit contacting proteins on the other side and probably holding the rRNA structure together. The combined cluster of proteins S8, S12 and S17 appears to hold together the shoulder and platform of the 30S subunit. The polypeptide is Small ribosomal subunit protein uS12 (Wolinella succinogenes (strain ATCC 29543 / DSM 1740 / CCUG 13145 / JCM 31913 / LMG 7466 / NCTC 11488 / FDC 602W) (Vibrio succinogenes)).